A 611-amino-acid polypeptide reads, in one-letter code: ATP-dependent zinc metalloprotease FtsH 1 (611 aa).

The Cytoplasmic segment spans residues Met-1–Lys-6. A helical transmembrane segment spans residues Ile-7–Leu-27. At Tyr-28 to Trp-107 the chain is on the extracellular side. A helical membrane pass occupies residues Trp-108–Phe-128. Phe-124–Gln-131 serves as a coordination point for ATP. The Cytoplasmic segment spans residues Met-129 to Ala-611. A Zn(2+)-binding site is contributed by His-423. Glu-424 is an active-site residue. Residues His-427 and Asp-499 each contribute to the Zn(2+) site.

In the central section; belongs to the AAA ATPase family. The protein in the C-terminal section; belongs to the peptidase M41 family. In terms of assembly, homohexamer. Zn(2+) is required as a cofactor.

Its subcellular location is the cell membrane. In terms of biological role, acts as a processive, ATP-dependent zinc metallopeptidase for both cytoplasmic and membrane proteins. Plays a role in the quality control of integral membrane proteins. The polypeptide is ATP-dependent zinc metalloprotease FtsH 1 (Thermoanaerobacter sp. (strain X514)).